The sequence spans 879 residues: MTSTNDIRSAFLEYFGSQGHRIVPSASLVPQNDPTLLFTNAGMVPFKNVFTGQETRPYSRATTAQKVVRAGGKHNDLDNVGYTARHHTFFEMMGNFSFGDYFKPEAIEFAWTLLTRDFGLPKDKLLATVYAEDEDAADLWKKIAGLSDDRIIRIGTSDNFWRMGDTGPCGPCSEIFYDHGDSVFGGPPGSPDEDGDRFVEIWNLVFMQFLDQPDGSRDALPRPSIDTGMGLERFAAIMQGKRDNYDTDTMRALIEASAEIMHQDADGPFKASHRVVADHLRSTAFLIADGVLPSKEGRGYVLRRIMRRAMRHLHIMGAKEPVFYRLLPALIQQMGAAYPELVQHQALIAQTMKGEEERFTALLERGLTLLSDELDRLGDKEALPGDVAFKLYDTFGFPLDLTQDALREKGRTVDEAGFETAMAEQRKRARAAWVGSGDAAAETVWFDARDKHGPSEFLGYVSEKADAEVQGIFRGNDELASAPAGDDTVAILLNQTPFYGESGGQVGDHGTLTAPGVRVEITDTQKRNGDLIVHYGKVVEGTLKPGMAVHAEIDHARRTAVRGHHSATHLLHEALRRQIGTHVTQKGSLNAPERLRFDISQPRPLTDEELAAVEAEVNARIRENAPVETRLMTQEEAVAEGAMALFGEKYGDEVRVVSMGKGDDDRPAYSIELCGGTHVGRVGEIGPFRIVSESGVSAGVRRIEAVCGLAAEALALETESRLKQIADLLKVPVADAASRVAALLEERKSLTAQVSDLQRKLATGEGTSATESINGITLSARDLGDVSPKELKGLAESISKQIASGVVALMSSADGRGSIVIAVTKDLTDRLDAVKLVREASALMGGKGGGGRPDMAQAGGPNADSDAVFAMLRKTLEAA.

Positions 565, 569, 674, and 678 each coordinate Zn(2+).

It belongs to the class-II aminoacyl-tRNA synthetase family. Zn(2+) serves as cofactor.

It localises to the cytoplasm. It carries out the reaction tRNA(Ala) + L-alanine + ATP = L-alanyl-tRNA(Ala) + AMP + diphosphate. In terms of biological role, catalyzes the attachment of alanine to tRNA(Ala) in a two-step reaction: alanine is first activated by ATP to form Ala-AMP and then transferred to the acceptor end of tRNA(Ala). Also edits incorrectly charged Ser-tRNA(Ala) and Gly-tRNA(Ala) via its editing domain. In Gluconobacter oxydans (strain 621H) (Gluconobacter suboxydans), this protein is Alanine--tRNA ligase.